The following is a 436-amino-acid chain: Diaminobutyrate--2-oxoglutarate transaminase (436 aa).

An N6-(pyridoxal phosphate)lysine modification is found at lysine 269.

The protein belongs to the class-III pyridoxal-phosphate-dependent aminotransferase family. Requires pyridoxal 5'-phosphate as cofactor.

It carries out the reaction L-2,4-diaminobutanoate + 2-oxoglutarate = L-aspartate 4-semialdehyde + L-glutamate. It participates in amine and polyamine biosynthesis; ectoine biosynthesis; L-ectoine from L-aspartate 4-semialdehyde: step 1/3. In terms of biological role, catalyzes reversively the conversion of L-aspartate beta-semialdehyde (ASA) to L-2,4-diaminobutyrate (DABA) by transamination with L-glutamate. The sequence is that of Diaminobutyrate--2-oxoglutarate transaminase (ectB) from Nocardia farcinica (strain IFM 10152).